Reading from the N-terminus, the 330-residue chain is Putative [LysW]-L-2-aminoadipate/[LysW]-L-glutamate phosphate reductase (330 aa).

Residue 10-13 (SGYI) coordinates NADP(+). C142 is a catalytic residue. Position 297 (N297) interacts with NADP(+).

It belongs to the NAGSA dehydrogenase family. Type 1 subfamily. LysY sub-subfamily.

It is found in the cytoplasm. It carries out the reaction [amino-group carrier protein]-C-terminal-N-(1-carboxy-5-oxopentan-1-yl)-L-glutamine + phosphate + NADP(+) = [amino-group carrier protein]-C-terminal-N-(1-carboxy-5-phosphooxy-5-oxopentan-1-yl)-L-glutamine + NADPH + H(+). It catalyses the reaction [amino-group carrier protein]-C-terminal-gamma-(L-glutamyl-5-semialdehyde)-L-glutamate + phosphate + NADP(+) = [amino-group carrier protein]-C-terminal-gamma-(5-phospho-L-glutamyl)-L-glutamate + NADPH + H(+). It functions in the pathway amino-acid biosynthesis; L-lysine biosynthesis via AAA pathway; L-lysine from L-alpha-aminoadipate (Thermus route): step 3/5. The protein operates within amino-acid biosynthesis; L-arginine biosynthesis. Its function is as follows. Involved in both the arginine and lysine biosynthetic pathways. This is Putative [LysW]-L-2-aminoadipate/[LysW]-L-glutamate phosphate reductase from Pyrococcus horikoshii (strain ATCC 700860 / DSM 12428 / JCM 9974 / NBRC 100139 / OT-3).